Consider the following 404-residue polypeptide: Phosphoglycerate kinase (404 aa).

Substrate-binding positions include 22-24 (DFN), Arg-37, 60-63 (HLGR), Arg-120, and Arg-160. Residues Lys-215, Glu-333, and 360–363 (GGDS) contribute to the ATP site.

This sequence belongs to the phosphoglycerate kinase family. As to quaternary structure, monomer.

Its subcellular location is the cytoplasm. The enzyme catalyses (2R)-3-phosphoglycerate + ATP = (2R)-3-phospho-glyceroyl phosphate + ADP. The protein operates within carbohydrate degradation; glycolysis; pyruvate from D-glyceraldehyde 3-phosphate: step 2/5. In Latilactobacillus sakei subsp. sakei (strain 23K) (Lactobacillus sakei subsp. sakei), this protein is Phosphoglycerate kinase.